The chain runs to 344 residues: Heat-inducible transcription repressor HrcA (344 aa).

The protein belongs to the HrcA family.

Functionally, negative regulator of class I heat shock genes (grpE-dnaK-dnaJ and groELS operons). Prevents heat-shock induction of these operons. In Streptococcus mutans serotype c (strain ATCC 700610 / UA159), this protein is Heat-inducible transcription repressor HrcA.